Here is a 345-residue protein sequence, read N- to C-terminus: V-type proton ATPase subunit d (345 aa).

Met1 carries the N-acetylmethionine modification.

It belongs to the V-ATPase V0D/AC39 subunit family. In terms of assembly, V-ATPase is a heteromultimeric enzyme composed of a peripheral catalytic V1 complex (components A to H) attached to an integral membrane V0 proton pore complex (components: a, c, c', c'', d, e, f and VOA1).

It localises to the vacuole membrane. Functionally, subunit of the V0 complex of vacuolar(H+)-ATPase (V-ATPase), a multisubunit enzyme composed of a peripheral complex (V1) that hydrolyzes ATP and a membrane integral complex (V0) that translocates protons. V-ATPase is responsible for acidifying and maintaining the pH of intracellular compartments. This subunit is a non-integral membrane component of the membrane pore domain and is required for proper assembly of the V0 sector. Might be involved in the regulated assembly of V1 subunits onto the membrane sector or alternatively may prevent the passage of protons through V0 pores. This is V-type proton ATPase subunit d from Saccharomyces cerevisiae (strain ATCC 204508 / S288c) (Baker's yeast).